A 60-amino-acid polypeptide reads, in one-letter code: Large ribosomal subunit protein uL30 (60 aa).

The protein belongs to the universal ribosomal protein uL30 family. In terms of assembly, part of the 50S ribosomal subunit.

This Streptococcus thermophilus (strain CNRZ 1066) protein is Large ribosomal subunit protein uL30.